The primary structure comprises 337 residues: 4-hydroxythreonine-4-phosphate dehydrogenase (337 aa).

2 residues coordinate substrate: H137 and T138. 3 residues coordinate a divalent metal cation: H167, H212, and H267. Positions 275, 284, and 293 each coordinate substrate.

It belongs to the PdxA family. Homodimer. Zn(2+) serves as cofactor. Requires Mg(2+) as cofactor. It depends on Co(2+) as a cofactor.

The protein resides in the cytoplasm. It catalyses the reaction 4-(phosphooxy)-L-threonine + NAD(+) = 3-amino-2-oxopropyl phosphate + CO2 + NADH. The protein operates within cofactor biosynthesis; pyridoxine 5'-phosphate biosynthesis; pyridoxine 5'-phosphate from D-erythrose 4-phosphate: step 4/5. Catalyzes the NAD(P)-dependent oxidation of 4-(phosphooxy)-L-threonine (HTP) into 2-amino-3-oxo-4-(phosphooxy)butyric acid which spontaneously decarboxylates to form 3-amino-2-oxopropyl phosphate (AHAP). In Ectopseudomonas mendocina (strain ymp) (Pseudomonas mendocina), this protein is 4-hydroxythreonine-4-phosphate dehydrogenase.